A 102-amino-acid chain; its full sequence is Small ribosomal subunit protein uS10 (102 aa).

It belongs to the universal ribosomal protein uS10 family. Part of the 30S ribosomal subunit.

Its function is as follows. Involved in the binding of tRNA to the ribosomes. The protein is Small ribosomal subunit protein uS10 of Thiobacillus denitrificans (strain ATCC 25259 / T1).